The sequence spans 679 residues: Stress-70 protein, mitochondrial (679 aa).

A mitochondrion-targeting transit peptide spans 1-46 (MISASRAAAARLVGTAASRSPAAARPQDGWNGLSHEAFRFVSRRDY). The interval 1–432 (MISASRAAAA…IQGGVLAGDV (432 aa)) is interaction with NFS1. 2 residues coordinate ADP: Thr-63 and Asn-64. The segment at 63-431 (TNSCVAVMEG…AIQGGVLAGD (369 aa)) is nucleotide-binding domain (NBD). The residue at position 76 (Lys-76) is an N6-acetyllysine. A Phosphothreonine modification is found at Thr-87. Residues Lys-135 and Lys-138 each carry the N6-acetyllysine; alternate modification. Residues Lys-135 and Lys-138 each carry the N6-succinyllysine; alternate modification. Residue Lys-143 is modified to N6-acetyllysine. Lys-206 is subject to N6-acetyllysine; alternate. Lys-206 carries the post-translational modification N6-succinyllysine; alternate. At Lys-206 the chain carries N6-malonyllysine; alternate. 2 positions are modified to N6-acetyllysine: Lys-234 and Lys-288. An N6-acetyllysine; alternate modification is found at Lys-300. Lys-300 carries the post-translational modification N6-succinyllysine; alternate. ADP-binding residues include Glu-313, Lys-316, and Ser-320. Lys-360 carries the post-translational modification N6-acetyllysine; alternate. Residue Lys-360 is modified to N6-succinyllysine; alternate. At Lys-368 the chain carries N6-succinyllysine. ADP contacts are provided by Gly-388 and Arg-391. Lys-394 carries the post-translational modification N6-succinyllysine. Ser-408 bears the Phosphoserine mark. Positions 432–441 (VTDVLLLDVT) are interdomain linker. The tract at residues 432–679 (VTDVLLLDVT…QKEDQKEEKQ (248 aa)) is interaction with FXN and ISCU. Residues 442 to 679 (PLSLGIETLG…QKEDQKEEKQ (238 aa)) form a substrate-binding domain (SBD) region. Residue Arg-513 is modified to Omega-N-methylarginine. Residues Lys-567 and Lys-600 each carry the N6-acetyllysine; alternate modification. N6-succinyllysine; alternate is present on residues Lys-567 and Lys-600. Lys-610 is modified (N6-succinyllysine). N6-acetyllysine is present on Lys-612. N6-acetyllysine; alternate is present on Lys-646. Lys-646 bears the N6-succinyllysine; alternate mark. The segment at 656–679 (ASEREGSGSSGTGEQKEDQKEEKQ) is disordered. The segment covering 669–679 (EQKEDQKEEKQ) has biased composition (basic and acidic residues).

It belongs to the heat shock protein 70 family. In terms of assembly, interacts strongly with the intermediate form of FXN and weakly with its mature form. Interacts with HSCB. Associates with the mitochondrial contact site and cristae organizing system (MICOS) complex, composed of at least MICOS10/MIC10, CHCHD3/MIC19, CHCHD6/MIC25, APOOL/MIC27, IMMT/MIC60, APOO/MIC23/MIC26 and QIL1/MIC13. This complex was also known under the names MINOS or MitOS complex. The MICOS complex associates with mitochondrial outer membrane proteins SAMM50, MTX1, MTX2 and DNAJC11, mitochondrial inner membrane protein TMEM11 and with HSPA9. Interacts with DNLZ, the interaction is required to prevent self-aggregation. Interacts with TESPA1. Interacts with PDPN. Interacts with NFU1, NFS1 and ISCU. Interacts with TP53; the interaction promotes TP53 degradation. Interacts (via SBD domain) with UBXN2A; the interaction with UBXN2A inhibits HSPA9/MOT-2 interaction with and degradation of TP53, thereby promotes TP53 translocation to the nucleus. Interacts with ITPR1 AND VDAC1; this interaction couples ITPR1 to VDAC1. Component of the TIM23 mitochondrial inner membrane pre-sequence translocase complex.

The protein localises to the mitochondrion. The protein resides in the nucleus. It is found in the nucleolus. Its subcellular location is the cytoplasm. It localises to the mitochondrion matrix. It catalyses the reaction ATP + H2O = ADP + phosphate + H(+). The chaperone activity is regulated by ATP-induced allosteric coupling of the nucleotide-binding (NBD) and substrate-binding (SBD) domains. ATP binding in the NBD leads to a conformational change in the NBD, which is transferred through the interdomain linker (IDL) to the substrate-binding domain (SBD). This elicits a reduced substrate affinity and a faster substrate exchange rate. Upon hydrolysis of ATP to ADP, the protein undergoes a conformational change that increases its affinity for substrate proteins. It cycles through repeated phases of ATP hydrolysis and nucleotide exchange, facilitating repeated cycles of substrate binding and release. Functions in collaboration with co-chaperones. Functions with the co-chaperone, DNLZ, to maintain solubility and regulate ATP hydrolysis. Nucleotide exchange factors, GRPEL1 and GRPEL2, accelerate nucleotide exchange. Its function is as follows. Mitochondrial chaperone that plays a key role in mitochondrial protein import, folding, and assembly. Plays an essential role in the protein quality control system, the correct folding of proteins, the re-folding of misfolded proteins, and the targeting of proteins for subsequent degradation. These processes are achieved through cycles of ATP binding, ATP hydrolysis, and ADP release, mediated by co-chaperones. In mitochondria, it associates with the TIM (translocase of the inner membrane) protein complex to assist in the import and folding of mitochondrial proteins. Plays an important role in mitochondrial iron-sulfur cluster (ISC) biogenesis. Interacts with and stabilizes ISC cluster assembly proteins FXN, NFU1, NFS1 and ISCU. Regulates erythropoiesis via stabilization of ISC assembly. Regulates mitochondrial calcium-dependent apoptosis by coupling two calcium channels, ITPR1 and VDAC1, at the mitochondria-associated endoplasmic reticulum (ER) membrane to facilitate calcium transport from the ER lumen to the mitochondria intermembrane space, providing calcium for the downstream calcium channel MCU, which releases it into the mitochondrial matrix. Although primarily located in the mitochondria, it is also found in other cellular compartments. In the cytosol, it associates with proteins involved in signaling, apoptosis, or senescence. It may play a role in cell cycle regulation via its interaction with and promotion of degradation of TP53. May play a role in the control of cell proliferation and cellular aging. Protects against reactive oxygen species (ROS). Extracellular HSPA9 plays a cytoprotective role by preventing cell lysis following immune attack by the membrane attack complex by disrupting formation of the complex. In Mus musculus (Mouse), this protein is Stress-70 protein, mitochondrial.